The sequence spans 551 residues: Cleavage and polyadenylation specificity factor subunit 6 (551 aa).

Residues 1 to 213 (MADGVDHIDI…RGRFPGAVPG (213 aa)) are necessary for interaction with NXF1. In terms of domain architecture, RRM spans 81 to 161 (IALYIGNLTW…QSPVVTPCNK (81 aa)). The tract at residues 81 to 161 (IALYIGNLTW…QSPVVTPCNK (81 aa)) is necessary for interaction with NUDT21/CPSF5. A necessary for nuclear paraspeckles localization region spans residues 81 to 161 (IALYIGNLTW…QSPVVTPCNK (81 aa)). Position 157 is a phosphothreonine (Thr157). Residues 169-180 (MQSRKTTQSGQM) are compositionally biased toward polar residues. Disordered stretches follow at residues 169-411 (MQSR…PLSE) and 477-551 (LHGI…YRHR). Residues 184–193 (GKAGPPGGGS) show a composition bias toward gly residues. Positions 202–206 (RGRGR) match the GAR motif. The segment covering 207–219 (FPGAVPGGDRFPG) has biased composition (low complexity). Pro residues-rich tracts occupy residues 220–265 (PAGP…PLAG), 285–366 (GQPP…PPPT), and 377–388 (GPPPTDPYGRPP). The segment covering 389–404 (PYDRGDYGPPGREMDT) has biased composition (basic and acidic residues). A phosphothreonine mark is found at Thr404 and Thr407. The interval 404–551 (TARTPLSEAE…RDREREYRHR (148 aa)) is sufficient for nuclear speckle localization. The tract at residues 405-551 (ARTPLSEAEF…RDREREYRHR (147 aa)) is necessary for RNA-binding. The segment at 481–551 (ESKSYGSGSR…RDREREYRHR (71 aa)) is necessary for interaction with SRSF3, SRSF7 and TRA2B/SFRS10. Residues 489–503 (SRRERSRERDHSRSR) show a composition bias toward basic and acidic residues. An arg/Ser-rich domain region spans residues 490 to 551 (RRERSRERDH…RDREREYRHR (62 aa)). A phosphoserine mark is found at Ser494, Ser500, Ser511, Ser513, and Ser525. The segment covering 504–514 (EKSRRHKSRSR) has biased composition (basic residues). The segment at 510 to 551 (KSRSRDRHDDYYRERSRERERHRDRDRDRDRERDREREYRHR) is sufficient for nuclear targeting. The span at 515–551 (DRHDDYYRERSRERERHRDRDRDRDRERDREREYRHR) shows a compositional bias: basic and acidic residues.

The protein belongs to the RRM CPSF6/7 family. In terms of assembly, component of the cleavage factor Im (CFIm) complex which is a heterotetramer composed of two subunits of NUDT21/CPSF5 and two subunits of CPSF6 or CPSF7 or a heterodimer of CPSF6 and CPSF7. The cleavage factor Im (CFIm) complex associates with the CPSF and CSTF complexes to promote the assembly of the core mRNA 3'-processing machinery. Associates with the exon junction complex (EJC). Associates with the 80S ribosome particle. Interacts (via the RRM domain) with NUDT21/CPSF5; this interaction is direct and enhances binding to RNA. Interacts (via Arg/Ser-rich domain) with FIP1L1 (preferentially via unphosphorylated form and Arg/Glu/Asp-rich domain); this interaction mediates, at least in part, the interaction between the CFIm and CPSF complexes and may be inhibited by CPSF6 hyper-phosphorylation. Interacts (via N-terminus) with NXF1; this interaction is direct. Interacts with SRSF3. Interacts with SRSF7. Interacts with SNRNP70. Interacts with TRA2B/SFRS10. Interacts with UPF1. Interacts with UPF3B. Interacts with VIRMA. Interacts (via Arg/Ser-rich domain) with TNPO3; promoting nuclear import of CPSF6 independently of its phosphorylation status. Interacts with YTHDC1. In terms of processing, phosphorylated. Phosphorylated in the Arg/Ser-rich domain by SRPK1, in vitro. Post-translationally, symmetrically dimethylated on arginine residues by PRMT5 in a WDR77- and CLNS1A-dependent manner. Asymmetrically dimethylated on arginine residues by PRMT1. Symmetrically dimethylated on arginine residues in the GAR motif by PRMT5 in a WDR77- and CLNS1A-dependent manner. Asymmetrically dimethylated on arginine residues in the GAR motif by PRMT1. In terms of tissue distribution, expressed in testis. Expressed in male germ cells (at protein level).

Its subcellular location is the nucleus. It localises to the nucleoplasm. It is found in the nucleus speckle. The protein localises to the cytoplasm. In terms of biological role, component of the cleavage factor Im (CFIm) complex that functions as an activator of the pre-mRNA 3'-end cleavage and polyadenylation processing required for the maturation of pre-mRNA into functional mRNAs. CFIm contributes to the recruitment of multiprotein complexes on specific sequences on the pre-mRNA 3'-end, so called cleavage and polyadenylation signals (pA signals). Most pre-mRNAs contain multiple pA signals, resulting in alternative cleavage and polyadenylation (APA) producing mRNAs with variable 3'-end formation. The CFIm complex acts as a key regulator of cleavage and polyadenylation site choice during APA through its binding to 5'-UGUA-3' elements localized in the 3'-untranslated region (UTR) for a huge number of pre-mRNAs. CPSF6 enhances NUDT21/CPSF5 binding to 5'-UGUA-3' elements localized upstream of pA signals and promotes RNA looping, and hence activates directly the mRNA 3'-processing machinery. Plays a role in mRNA export. This Mus musculus (Mouse) protein is Cleavage and polyadenylation specificity factor subunit 6.